The chain runs to 523 residues: UDP-glucuronosyltransferase 3A1 (523 aa).

A signal peptide spans M1–A22. At A23–Q483 the chain is on the extracellular side. N52 carries an N-linked (GlcNAc...) asparagine glycan. Residues Y484–G504 form a helical membrane-spanning segment. Over K505–T523 the chain is Cytoplasmic.

This sequence belongs to the UDP-glycosyltransferase family.

The protein resides in the membrane. It catalyses the reaction glucuronate acceptor + UDP-alpha-D-glucuronate = acceptor beta-D-glucuronoside + UDP + H(+). UDP-glucuronosyltransferases catalyze phase II biotransformation reactions in which lipophilic substrates are conjugated with glucuronic acid to increase water solubility and enhance excretion. They are of major importance in the conjugation and subsequent elimination of potentially toxic xenobiotics and endogenous compounds. In Homo sapiens (Human), this protein is UDP-glucuronosyltransferase 3A1 (UGT3A1).